We begin with the raw amino-acid sequence, 545 residues long: Squalene monooxygenase SE2 (545 aa).

A helical membrane pass occupies residues 12–32; it reads EYFLMFAATLLFGFVLYLFTL. FAD is bound by residues 86-87, 106-107, Arg-114, Arg-185, Val-201, Asp-364, and Met-377; these read VA and ER. Transmembrane regions (helical) follow at residues 475–495 and 500–520; these read LFFHFFAVAIYGVGRLLIPFP and MWLGARLISGASGIIFPIIKS.

This sequence belongs to the squalene monooxygenase family. It depends on FAD as a cofactor. As to expression, weak expression in petioles and flower buds and barely detectable in roots and leaves. In petioles, preferentially observed in vascular bundle tissue (phloem cells and parenchymatous cells near xylem) and resin ducts.

It is found in the membrane. The catalysed reaction is squalene + reduced [NADPH--hemoprotein reductase] + O2 = (S)-2,3-epoxysqualene + oxidized [NADPH--hemoprotein reductase] + H2O + H(+). Its pathway is terpene metabolism; lanosterol biosynthesis; lanosterol from farnesyl diphosphate: step 2/3. In terms of biological role, component of the triterpene saponins (e.g. ginsenosides or panaxosides) and phytosterols biosynthetic pathways. Catalyzes the first oxygenation step in sterol biosynthesis and is suggested to be one of the rate-limiting enzymes in this pathway. This chain is Squalene monooxygenase SE2, found in Panax ginseng (Korean ginseng).